The following is a 468-amino-acid chain: Peroxisome proliferator-activated receptor alpha (468 aa).

Residues M1–E20 form a disordered region. A DNA-binding region (nuclear receptor) is located at residues N99–F173. 2 NR C4-type zinc fingers span residues C102–C122 and C139–C161. Residues F239–D466 enclose the NR LBD domain. Residues D304 to L433 are required for heterodimerization with RXRA.

The protein belongs to the nuclear hormone receptor family. NR1 subfamily. In terms of assembly, heterodimer; with RXRA. This heterodimerization is required for DNA binding and transactivation activity. Interacts with NCOA3 coactivator. Interacts with CITED2; the interaction stimulates its transcriptional activity. Also interacts with PPARBP in vitro. Interacts with AKAP13, LPIN1, PRDM16 and coactivator NCOA6. Interacts with ASXL1 and ASXL2. Interacts with PER2. Interacts with SIRT1; the interaction seems to be modulated by NAD(+) levels. Interacts with CRY1 and CRY2. In hepatocytes, interacts with PAQR3 and HUWE1; the interactions promote PPARA poylubiquitination and HUWE1-mediated degradation. Post-translationally, ubiquitinated by E3 ubiquitin-protein ligase HUWE1; leading to proteasomal degradation. In terms of processing, phosphorylated.

The protein localises to the nucleus. In terms of biological role, ligand-activated transcription factor. Key regulator of lipid metabolism. Activated by the endogenous ligand 1-palmitoyl-2-oleoyl-sn-glycerol-3-phosphocholine (16:0/18:1-GPC). Activated by oleylethanolamide, a naturally occurring lipid that regulates satiety. Receptor for peroxisome proliferators such as hypolipidemic drugs and fatty acids. Regulates the peroxisomal beta-oxidation pathway of fatty acids. Functions as a transcription activator for the ACOX1 and P450 genes. Transactivation activity requires heterodimerization with RXRA and is antagonized by NR2C2. May be required for the propagation of clock information to metabolic pathways regulated by PER2. In Phascolarctos cinereus (Koala), this protein is Peroxisome proliferator-activated receptor alpha (PPARA).